We begin with the raw amino-acid sequence, 701 residues long: Peptide transporter CstA (701 aa).

Over 1–6 the chain is Cytoplasmic; sequence MNKSGK. Residues 7–27 traverse the membrane as a helical segment; that stretch reads YLVWTVLSVMGAFALGYIALN. The Periplasmic portion of the chain corresponds to 28-33; it reads RGEQIN. Residues 34-54 form a helical membrane-spanning segment; sequence ALWIVVASVCIYLIAYRFYGL. At 55-86 the chain is on the cytoplasmic side; that stretch reads YIAKNVLAVDPTRMTPAVRHNDGLDYVPTDKK. Residues 87-107 form a helical membrane-spanning segment; it reads VLFGHHFAAIAGAGPLVGPVL. The Periplasmic segment spans residues 108–117; it reads AAQMGYLPGM. The chain crosses the membrane as a helical span at residues 118–138; sequence IWLLAGVVLAGAVQDFMVLFV. Over 139 to 160 the chain is Cytoplasmic; the sequence is STRRDGRSLGELVKEEMGPTAG. A helical transmembrane segment spans residues 161–181; the sequence is VIALVACFMIMVIILAVLAMI. Residues 182–189 lie on the Periplasmic side of the membrane; that stretch reads VVKALTHS. Residues 190–210 traverse the membrane as a helical segment; sequence PWGTYTVAFTIPLALFMGIYL. Over 211–217 the chain is Cytoplasmic; the sequence is RYLRPGR. The chain crosses the membrane as a helical span at residues 218-238; that stretch reads IGEVSVIGLVFLIFAIISGGW. Over 239–255 the chain is Periplasmic; the sequence is VAESPTWAPYFDFTGVQ. A helical membrane pass occupies residues 256–276; sequence LTWMLVGYGFVAAVLPVWLLL. Residues 277-280 lie on the Cytoplasmic side of the membrane; the sequence is APRD. The chain crosses the membrane as a helical span at residues 281–301; that stretch reads YLSTFLKIGTIVGLAVGILIM. The Periplasmic portion of the chain corresponds to 302 to 324; that stretch reads RPTLTMPALTKFVDGTGPVWTGN. The helical transmembrane segment at 325 to 345 threads the bilayer; the sequence is LFPFLFITIACGAVSGFHALI. Residues 346–372 are Cytoplasmic-facing; the sequence is SSGTTPKMLANEGQACFIGYGGMLMES. Residues 373–393 traverse the membrane as a helical segment; it reads FVAIMALVSACIIDPGVYFAM. Topologically, residues 394–395 are periplasmic; it reads NS. The helical transmembrane segment at 396-416 threads the bilayer; it reads PMAVLAPAGTADVVASAAQVV. The Cytoplasmic segment spans residues 417 to 439; sequence SSWGFSITPDTLNQIASEVGEQS. Residues 440–460 form a helical membrane-spanning segment; that stretch reads IISRAGGAPTLAVGMAYILHG. The Periplasmic portion of the chain corresponds to 461 to 463; it reads ALG. Residues 464-484 form a helical membrane-spanning segment; sequence GMMDVAFWYHFAILFEALFIL. The Cytoplasmic portion of the chain corresponds to 485 to 523; it reads TAVDAGTRAARFMLQDLLGVVSPGLKRTDSLPANLLATA. A helical transmembrane segment spans residues 524–544; it reads LCVLAWGYFLHQGVVDPLGGI. Residues 545 to 550 are Periplasmic-facing; sequence NTLWPL. A helical membrane pass occupies residues 551 to 571; it reads FGIANQMLAGMALMLCAVVLF. Residues 572 to 577 lie on the Cytoplasmic side of the membrane; it reads KMKRQR. Residues 578 to 598 traverse the membrane as a helical segment; sequence YAWVALVPTAWLLICTLTAGW. Topologically, residues 599-643 are periplasmic; it reads QKAFSPDAKVGFLAIANKFQAMIDSGNIPSQYTESQLAQLVFNNR. Residues 644–664 traverse the membrane as a helical segment; the sequence is LDAGLTIFFMVVVVVLALFSI. Topologically, residues 665 to 701 are cytoplasmic; that stretch reads KTALAALKDPKPTAKETPYEPMPENVEEIVAQAKGAH.

It belongs to the peptide transporter carbon starvation (CstA) (TC 2.A.114) family.

Its subcellular location is the cell inner membrane. Its function is as follows. Involved in peptide utilization during carbon starvation. The protein is Peptide transporter CstA of Escherichia coli (strain K12).